A 477-amino-acid polypeptide reads, in one-letter code: Transposase for insertion sequence element IS231F (477 aa).

The protein belongs to the transposase 11 family.

Functionally, involved in the transposition of the insertion sequence. In Bacillus thuringiensis subsp. israelensis, this protein is Transposase for insertion sequence element IS231F.